The chain runs to 289 residues: UPF0276 protein BPP1075 (289 aa).

It belongs to the UPF0276 family.

This Bordetella parapertussis (strain 12822 / ATCC BAA-587 / NCTC 13253) protein is UPF0276 protein BPP1075.